Consider the following 547-residue polypeptide: Fumarate reductase (CoM/CoB) subunit A (547 aa).

Belongs to the FAD-dependent oxidoreductase 2 family. As to quaternary structure, subunit A of the heterodimeric fumarate reductase of methanogenic Archaea, composed of subunits A (TfrA) and B (TfrB). An oxidized flavin serves as cofactor.

Its subcellular location is the cytoplasm. It catalyses the reaction coenzyme B + coenzyme M + fumarate = coenzyme M-coenzyme B heterodisulfide + succinate. In terms of biological role, catalyzes the reduction of fumarate with reduced coenzyme M (CoM-S-H) and coenzyme B (CoB-S-H). In vitro, is able to reduces fumarate with reduced benzyl viologen, oxidize CoM-S-H and CoB-S-H to CoM-S-S-CoB with methylene blue, and reduce CoM-S-S-CoB with reduced benzyl viologen. The enzyme has specificity for the two thiol compounds as the CoB--CoM heterodisulfide reductase. The enzyme is very sensitive to oxygen. The chain is Fumarate reductase (CoM/CoB) subunit A from Methanothermobacter marburgensis (strain ATCC BAA-927 / DSM 2133 / JCM 14651 / NBRC 100331 / OCM 82 / Marburg) (Methanobacterium thermoautotrophicum).